The sequence spans 564 residues: Dihydropyrimidinase-related protein 5 (564 aa).

Residues threonine 509 and threonine 514 each carry the phosphothreonine modification. A phosphoserine mark is found at serine 532 and serine 538. The residue at position 559 (arginine 559) is an Omega-N-methylarginine.

It belongs to the metallo-dependent hydrolases superfamily. Hydantoinase/dihydropyrimidinase family. In terms of assembly, homotetramer, and heterotetramer with other DPYS-like proteins. Interacts with DPYSL2, DPYSL3 and DPYSL4. Interacts with MAP2 and TUBB3. In terms of tissue distribution, highly expressed in embryonic and early postnatal brain and spinal cord.

Its subcellular location is the cytoplasm. Functionally, involved in the negative regulation of dendrite outgrowth. This is Dihydropyrimidinase-related protein 5 (Dpysl5) from Rattus norvegicus (Rat).